A 271-amino-acid chain; its full sequence is Mannosyl-3-phosphoglycerate phosphatase (271 aa).

Catalysis depends on Asp-13, which acts as the Nucleophile. 3 residues coordinate Mg(2+): Asp-13, Asp-15, and Asp-214.

Belongs to the HAD-like hydrolase superfamily. MPGP family. Mg(2+) is required as a cofactor.

Its subcellular location is the cytoplasm. The enzyme catalyses 2-O-(alpha-D-mannosyl)-3-phosphoglycerate + H2O = (2R)-2-O-(alpha-D-mannosyl)-glycerate + phosphate. This chain is Mannosyl-3-phosphoglycerate phosphatase, found in Escherichia coli O45:K1 (strain S88 / ExPEC).